The sequence spans 733 residues: Photosystem I P700 chlorophyll a apoprotein A2 (733 aa).

Helical transmembrane passes span 46-69, 134-157, 174-198, 272-290, 329-352, 368-394, 416-438, and 516-534; these read IFASHFGHLAVIFLWTAGNLFHVA, LYLGSVGLLILASVLLFAGWLHLQ, LNHHLSGLLGVSSLAWTGHIVHVAI, IAHHQLAIAVVFIVAGHMY, LHMQLGLALACLGVATSLTAQHMY, AALYTHHQYIAGFLMVGAFAHGAIFFV, AIISHLSWASLFLGFHTLGLYIH, and FLVHHAIALGLHTTTLILV. Residues cysteine 558 and cysteine 567 each contribute to the [4Fe-4S] cluster site. The next 2 membrane-spanning stretches (helical) occupy residues 574–595 and 642–664; these read AFYLAMFWMLNTIGWVTFYWHW and LSVWAWMFLFGHLIWATGFMFLI. Chlorophyll a is bound by residues histidine 653, methionine 661, and tyrosine 669. Tryptophan 670 contacts phylloquinone. Residues 706–726 traverse the membrane as a helical segment; the sequence is LVGLVHFTVGYVLTYAAFVIA.

Belongs to the PsaA/PsaB family. The PsaA/B heterodimer binds the P700 chlorophyll special pair and subsequent electron acceptors. PSI consists of a core antenna complex that captures photons, and an electron transfer chain that converts photonic excitation into a charge separation. The eukaryotic PSI reaction center is composed of at least 11 subunits. It depends on P700 is a chlorophyll a/chlorophyll a' dimer, A0 is one or more chlorophyll a, A1 is one or both phylloquinones and FX is a shared 4Fe-4S iron-sulfur center. as a cofactor.

Its subcellular location is the plastid. It localises to the chloroplast thylakoid membrane. It catalyses the reaction reduced [plastocyanin] + hnu + oxidized [2Fe-2S]-[ferredoxin] = oxidized [plastocyanin] + reduced [2Fe-2S]-[ferredoxin]. PsaA and PsaB bind P700, the primary electron donor of photosystem I (PSI), as well as the electron acceptors A0, A1 and FX. PSI is a plastocyanin/cytochrome c6-ferredoxin oxidoreductase, converting photonic excitation into a charge separation, which transfers an electron from the donor P700 chlorophyll pair to the spectroscopically characterized acceptors A0, A1, FX, FA and FB in turn. Oxidized P700 is reduced on the lumenal side of the thylakoid membrane by plastocyanin or cytochrome c6. This chain is Photosystem I P700 chlorophyll a apoprotein A2, found in Phaeodactylum tricornutum (strain CCAP 1055/1).